Here is an 854-residue protein sequence, read N- to C-terminus: Protein mono-ADP-ribosyltransferase PARP8 (854 aa).

Disordered regions lie at residues 113–138 (NGEESRQNSTVEEDSEGDNDSEEFYY) and 291–310 (SYPPPGCGKSKSKLKSEQDG). Residues 123 to 135 (VEEDSEGDNDSEE) are compositionally biased toward acidic residues. An ADP-ribosylcysteine mark is found at Cys332, Cys367, Cys376, and Cys395. The PARP catalytic domain occupies 617 to 844 (EMTQAPYLEI…QEGGIHKEIL (228 aa)). The interval 750-777 (QKVSAKDEPASSSKSSNTSQSQKKGQQS) is disordered. A compositionally biased stretch (low complexity) spans 760 to 777 (SSSKSSNTSQSQKKGQQS).

This sequence belongs to the ARTD/PARP family. Auto-mono-ADP-ribosylated.

It catalyses the reaction L-cysteinyl-[protein] + NAD(+) = S-(ADP-D-ribosyl)-L-cysteinyl-[protein] + nicotinamide + H(+). Its function is as follows. Mono-ADP-ribosyltransferase that mediates mono-ADP-ribosylation of target proteins. The protein is Protein mono-ADP-ribosyltransferase PARP8 of Homo sapiens (Human).